Here is a 496-residue protein sequence, read N- to C-terminus: Putative aldehyde dehydrogenase-like protein C922.07c (496 aa).

NAD(+) is bound at residue 241–246 (GSTKVG). E263 acts as the Proton acceptor in catalysis. C297 functions as the Nucleophile in the catalytic mechanism.

This sequence belongs to the aldehyde dehydrogenase family.

Its subcellular location is the cytoplasm. The protein resides in the nucleus. The chain is Putative aldehyde dehydrogenase-like protein C922.07c from Schizosaccharomyces pombe (strain 972 / ATCC 24843) (Fission yeast).